The following is a 1759-amino-acid chain: Protein TIC 214 (1759 aa).

A run of 5 helical transmembrane segments spans residues 23-45 (VVVG…LFLL), 64-84 (FITG…HLAL), 129-149 (IFFQ…SSIF), 172-192 (IGWI…LICI), and 221-241 (IFVV…PPPF).

It belongs to the TIC214 family. Part of the Tic complex.

The protein resides in the plastid. Its subcellular location is the chloroplast inner membrane. Functionally, involved in protein precursor import into chloroplasts. May be part of an intermediate translocation complex acting as a protein-conducting channel at the inner envelope. This Phaseolus vulgaris (Kidney bean) protein is Protein TIC 214.